Here is a 208-residue protein sequence, read N- to C-terminus: Probable acyl-homoserine-lactone synthase (208 aa).

It belongs to the autoinducer synthase family.

It catalyses the reaction a fatty acyl-[ACP] + S-adenosyl-L-methionine = an N-acyl-L-homoserine lactone + S-methyl-5'-thioadenosine + holo-[ACP] + H(+). Required for the synthesis of OHHL (N-(3-oxooctanoyl)-L-homoserine lactone), an autoinducer molecule which binds to TraR and thus acts in the control of conjugal transfer. In Sinorhizobium fredii (strain NBRC 101917 / NGR234), this protein is Probable acyl-homoserine-lactone synthase (traI).